The primary structure comprises 163 residues: Cytochrome b6-f complex subunit 4 (163 aa).

The next 3 membrane-spanning stretches (helical) occupy residues 36–56 (LLYI…GLAV), 95–115 (LLGV…PFLE), and 131–151 (TVFL…TLPI).

The protein belongs to the cytochrome b family. PetD subfamily. As to quaternary structure, the 4 large subunits of the cytochrome b6-f complex are cytochrome b6, subunit IV (17 kDa polypeptide, petD), cytochrome f and the Rieske protein, while the 4 small subunits are petG, petL, petM and petN. The complex functions as a dimer.

The protein resides in the plastid. Its subcellular location is the chloroplast thylakoid membrane. Functionally, component of the cytochrome b6-f complex, which mediates electron transfer between photosystem II (PSII) and photosystem I (PSI), cyclic electron flow around PSI, and state transitions. The chain is Cytochrome b6-f complex subunit 4 from Drimys granadensis.